A 307-amino-acid polypeptide reads, in one-letter code: Ribonuclease Z (307 aa).

Zn(2+)-binding residues include histidine 61, histidine 63, aspartate 65, histidine 66, histidine 138, aspartate 208, and histidine 264. The active-site Proton acceptor is the aspartate 65.

It belongs to the RNase Z family. Homodimer. Zn(2+) serves as cofactor.

It carries out the reaction Endonucleolytic cleavage of RNA, removing extra 3' nucleotides from tRNA precursor, generating 3' termini of tRNAs. A 3'-hydroxy group is left at the tRNA terminus and a 5'-phosphoryl group is left at the trailer molecule.. In terms of biological role, zinc phosphodiesterase, which displays some tRNA 3'-processing endonuclease activity. Probably involved in tRNA maturation, by removing a 3'-trailer from precursor tRNA. Also shows activity toward a broad range of substrates, such as intron containing pre-tRNAs, 5' extended precursors and non-RNA substrates. This chain is Ribonuclease Z, found in Pyrococcus furiosus (strain ATCC 43587 / DSM 3638 / JCM 8422 / Vc1).